We begin with the raw amino-acid sequence, 130 residues long: Small ribosomal subunit protein uS9 (130 aa).

It belongs to the universal ribosomal protein uS9 family.

This Acidovorax ebreus (strain TPSY) (Diaphorobacter sp. (strain TPSY)) protein is Small ribosomal subunit protein uS9.